We begin with the raw amino-acid sequence, 145 residues long: D-aminoacyl-tRNA deacylase (145 aa).

The Gly-cisPro motif, important for rejection of L-amino acids motif lies at 137–138 (GP).

Belongs to the DTD family. In terms of assembly, homodimer.

It localises to the cytoplasm. It catalyses the reaction glycyl-tRNA(Ala) + H2O = tRNA(Ala) + glycine + H(+). It carries out the reaction a D-aminoacyl-tRNA + H2O = a tRNA + a D-alpha-amino acid + H(+). Its function is as follows. An aminoacyl-tRNA editing enzyme that deacylates mischarged D-aminoacyl-tRNAs. Also deacylates mischarged glycyl-tRNA(Ala), protecting cells against glycine mischarging by AlaRS. Acts via tRNA-based rather than protein-based catalysis; rejects L-amino acids rather than detecting D-amino acids in the active site. By recycling D-aminoacyl-tRNA to D-amino acids and free tRNA molecules, this enzyme counteracts the toxicity associated with the formation of D-aminoacyl-tRNA entities in vivo and helps enforce protein L-homochirality. This chain is D-aminoacyl-tRNA deacylase, found in Shewanella baltica (strain OS223).